The following is a 528-amino-acid chain: J domain-containing protein APJ1 (528 aa).

The J domain maps to 4 to 73 (NTSLYDSLNV…RALYDQYGTT (70 aa)). A CR-type zinc finger spans residues 193–274 (GKTAKLGLNR…CQGLGFIKER (82 aa)). 4 CXXCXGXG motif repeats span residues 206–213 (CSVCDGHG), 218–225 (CTCKTCKG), 246–253 (CADCGGAG), and 262–269 (CQQCQGLG). The span at 485–499 (NERDSRKRNNRRFDE) shows a compositional bias: basic and acidic residues. The disordered stretch occupies residues 485–528 (NERDSRKRNNRRFDESNINNNNETKRNKYSSPVSGFYDHDINGY).

Its subcellular location is the cytoplasm. It is found in the nucleus. Putative chaperone involved in protein folding. Interferes with propagation of [PSI+] prion when overproduced. In Saccharomyces cerevisiae (strain ATCC 204508 / S288c) (Baker's yeast), this protein is J domain-containing protein APJ1 (APJ1).